The chain runs to 309 residues: Dihydroorotate dehydrogenase B (NAD(+)), catalytic subunit (309 aa).

Residues serine 21 and 45–46 (KA) contribute to the FMN site. Residues lysine 45 and 69 to 73 (NAIGL) each bind substrate. Residues asparagine 99 and asparagine 127 each contribute to the FMN site. Asparagine 127 contacts substrate. Residue cysteine 130 is the Nucleophile of the active site. The FMN site is built by lysine 165 and isoleucine 191. 192-193 (NT) lines the substrate pocket. FMN-binding positions include glycine 217, 243–244 (GG), and 265–266 (GT).

This sequence belongs to the dihydroorotate dehydrogenase family. Type 1 subfamily. As to quaternary structure, heterotetramer of 2 PyrK and 2 PyrD type B subunits. FMN is required as a cofactor.

The protein resides in the cytoplasm. It carries out the reaction (S)-dihydroorotate + NAD(+) = orotate + NADH + H(+). It participates in pyrimidine metabolism; UMP biosynthesis via de novo pathway; orotate from (S)-dihydroorotate (NAD(+) route): step 1/1. Functionally, catalyzes the conversion of dihydroorotate to orotate with NAD(+) as electron acceptor. This chain is Dihydroorotate dehydrogenase B (NAD(+)), catalytic subunit (pyrD), found in Bacillus cereus (strain ATCC 14579 / DSM 31 / CCUG 7414 / JCM 2152 / NBRC 15305 / NCIMB 9373 / NCTC 2599 / NRRL B-3711).